A 310-amino-acid chain; its full sequence is 2-methoxy-6-polyprenyl-1,4-benzoquinol methylase, mitochondrial (310 aa).

The transit peptide at 1-6 (MAHMRS) directs the protein to the mitochondrion. S-adenosyl-L-methionine-binding positions include Thr-99, Asp-154, and 182-183 (DA).

This sequence belongs to the class I-like SAM-binding methyltransferase superfamily. MenG/UbiE family. As to quaternary structure, component of a multi-subunit COQ enzyme complex, composed of at least coq3, coq4, coq5, coq6, coq7 and coq9.

The protein localises to the mitochondrion inner membrane. It catalyses the reaction a 2-methoxy-6-(all-trans-polyprenyl)benzene-1,4-diol + S-adenosyl-L-methionine = a 5-methoxy-2-methyl-3-(all-trans-polyprenyl)benzene-1,4-diol + S-adenosyl-L-homocysteine + H(+). Its pathway is cofactor biosynthesis; ubiquinone biosynthesis. In terms of biological role, methyltransferase required for the conversion of 2-polyprenyl-6-methoxy-1,4-benzoquinol (DDMQH2) to 2-polyprenyl-3-methyl-6-methoxy-1,4-benzoquinol (DMQH2). This chain is 2-methoxy-6-polyprenyl-1,4-benzoquinol methylase, mitochondrial, found in Xenopus laevis (African clawed frog).